The sequence spans 64 residues: Translation machinery-associated protein 7 homolog (64 aa).

A disordered region spans residues Met1–Lys64. Positions Asp21–Arg50 form a coiled coil. The span at Glu28–Ala44 shows a compositional bias: basic and acidic residues. Over residues Leu53–Lys64 the composition is skewed to gly residues.

The protein belongs to the TMA7 family.

In Caenorhabditis briggsae, this protein is Translation machinery-associated protein 7 homolog.